The primary structure comprises 63 residues: Large ribosomal subunit protein uL29 (63 aa).

The protein belongs to the universal ribosomal protein uL29 family.

The polypeptide is Large ribosomal subunit protein uL29 (Tolumonas auensis (strain DSM 9187 / NBRC 110442 / TA 4)).